Reading from the N-terminus, the 466-residue chain is Ribulose bisphosphate carboxylase large chain (466 aa).

An N6,N6,N6-trimethyllysine modification is found at K4. Positions 113 and 163 each coordinate substrate. The Proton acceptor role is filled by K165. K167 contributes to the substrate binding site. K191, D193, and E194 together coordinate Mg(2+). K191 carries the post-translational modification N6-carboxylysine. H284 serves as the catalytic Proton acceptor. 3 residues coordinate substrate: R285, H317, and S369.

It belongs to the RuBisCO large chain family. Type I subfamily. In terms of assembly, heterohexadecamer of 8 large chains and 8 small chains; disulfide-linked. The disulfide link is formed within the large subunit homodimers. Requires Mg(2+) as cofactor. In terms of processing, the disulfide bond which can form in the large chain dimeric partners within the hexadecamer appears to be associated with oxidative stress and protein turnover.

It is found in the plastid. It localises to the chloroplast. It carries out the reaction 2 (2R)-3-phosphoglycerate + 2 H(+) = D-ribulose 1,5-bisphosphate + CO2 + H2O. The enzyme catalyses D-ribulose 1,5-bisphosphate + O2 = 2-phosphoglycolate + (2R)-3-phosphoglycerate + 2 H(+). In terms of biological role, ruBisCO catalyzes two reactions: the carboxylation of D-ribulose 1,5-bisphosphate, the primary event in carbon dioxide fixation, as well as the oxidative fragmentation of the pentose substrate in the photorespiration process. Both reactions occur simultaneously and in competition at the same active site. This chain is Ribulose bisphosphate carboxylase large chain, found in Justicia odora (Water willow).